The primary structure comprises 186 residues: Ribosome rescue factor SmrB (186 aa).

The 76-residue stretch at 99–174 (IDLHGLTQHQ…SDAAIIVIIE (76 aa)) folds into the Smr domain.

The protein belongs to the SmrB family. In terms of assembly, associates with collided ribosomes, but not with correctly translating polysomes.

In terms of biological role, acts as a ribosome collision sensor. Detects stalled/collided disomes (pairs of ribosomes where the leading ribosome is stalled and a second ribosome has collided with it) and endonucleolytically cleaves mRNA at the 5' boundary of the stalled ribosome. Stalled/collided disomes form a new interface (primarily via the 30S subunits) that binds SmrB. Cleaved mRNA becomes available for tmRNA ligation, leading to ribosomal subunit dissociation and rescue of stalled ribosomes. The protein is Ribosome rescue factor SmrB of Buchnera aphidicola subsp. Acyrthosiphon pisum (strain 5A).